We begin with the raw amino-acid sequence, 429 residues long: UPF0597 protein GSU1527 (429 aa).

It belongs to the UPF0597 family.

This Geobacter sulfurreducens (strain ATCC 51573 / DSM 12127 / PCA) protein is UPF0597 protein GSU1527.